A 475-amino-acid polypeptide reads, in one-letter code: Ribulose bisphosphate carboxylase large chain (475 aa).

The propeptide occupies 1–2; it reads MS. Residue P3 is modified to N-acetylproline. K14 carries the N6,N6,N6-trimethyllysine modification. Substrate-binding residues include N123 and T173. K175 serves as the catalytic Proton acceptor. K177 is a substrate binding site. Residues K201, D203, and E204 each contribute to the Mg(2+) site. K201 is subject to N6-carboxylysine. H294 serves as the catalytic Proton acceptor. R295, H327, and S379 together coordinate substrate.

The protein belongs to the RuBisCO large chain family. Type I subfamily. As to quaternary structure, heterohexadecamer of 8 large chains and 8 small chains; disulfide-linked. The disulfide link is formed within the large subunit homodimers. Mg(2+) serves as cofactor. Post-translationally, the disulfide bond which can form in the large chain dimeric partners within the hexadecamer appears to be associated with oxidative stress and protein turnover.

The protein resides in the plastid. It localises to the chloroplast. It carries out the reaction 2 (2R)-3-phosphoglycerate + 2 H(+) = D-ribulose 1,5-bisphosphate + CO2 + H2O. The catalysed reaction is D-ribulose 1,5-bisphosphate + O2 = 2-phosphoglycolate + (2R)-3-phosphoglycerate + 2 H(+). Functionally, ruBisCO catalyzes two reactions: the carboxylation of D-ribulose 1,5-bisphosphate, the primary event in carbon dioxide fixation, as well as the oxidative fragmentation of the pentose substrate in the photorespiration process. Both reactions occur simultaneously and in competition at the same active site. This Pinus koraiensis (Korean pine) protein is Ribulose bisphosphate carboxylase large chain.